Consider the following 354-residue polypeptide: UDP-N-acetylglucosamine--N-acetylmuramyl-(pentapeptide) pyrophosphoryl-undecaprenol N-acetylglucosamine transferase (354 aa).

UDP-N-acetyl-alpha-D-glucosamine is bound by residues 13–15, N125, S189, I242, 261–266, and Q286; these read SGG and ALTVSE.

The protein belongs to the glycosyltransferase 28 family. MurG subfamily.

It is found in the cell inner membrane. The enzyme catalyses di-trans,octa-cis-undecaprenyl diphospho-N-acetyl-alpha-D-muramoyl-L-alanyl-D-glutamyl-meso-2,6-diaminopimeloyl-D-alanyl-D-alanine + UDP-N-acetyl-alpha-D-glucosamine = di-trans,octa-cis-undecaprenyl diphospho-[N-acetyl-alpha-D-glucosaminyl-(1-&gt;4)]-N-acetyl-alpha-D-muramoyl-L-alanyl-D-glutamyl-meso-2,6-diaminopimeloyl-D-alanyl-D-alanine + UDP + H(+). The protein operates within cell wall biogenesis; peptidoglycan biosynthesis. Its function is as follows. Cell wall formation. Catalyzes the transfer of a GlcNAc subunit on undecaprenyl-pyrophosphoryl-MurNAc-pentapeptide (lipid intermediate I) to form undecaprenyl-pyrophosphoryl-MurNAc-(pentapeptide)GlcNAc (lipid intermediate II). The protein is UDP-N-acetylglucosamine--N-acetylmuramyl-(pentapeptide) pyrophosphoryl-undecaprenol N-acetylglucosamine transferase of Buchnera aphidicola subsp. Acyrthosiphon pisum (strain 5A).